Reading from the N-terminus, the 631-residue chain is Beta-galactosidase-1-like protein 3 (631 aa).

Residue Glu203 is the Proton donor of the active site. Glu277 (nucleophile) is an active-site residue.

Belongs to the glycosyl hydrolase 35 family.

The sequence is that of Beta-galactosidase-1-like protein 3 (Glb1l3) from Rattus norvegicus (Rat).